A 130-amino-acid chain; its full sequence is Small ribosomal subunit protein uS8 (130 aa).

It belongs to the universal ribosomal protein uS8 family. As to quaternary structure, part of the 30S ribosomal subunit.

Its function is as follows. One of the primary rRNA binding proteins, it binds directly to 16S rRNA central domain where it helps coordinate assembly of the platform of the 30S subunit. This is Small ribosomal subunit protein uS8 from Methanococcus maripaludis (strain C7 / ATCC BAA-1331).